Reading from the N-terminus, the 663-residue chain is General transcription and DNA repair factor IIH subunit tcf-29 (663 aa).

BSD domains lie at 147–206 (WFED…RAYA) and 227–278 (ENGE…LSKK). Disordered stretches follow at residues 452–491 (DSDGRGGIDLHRSIGVDPDSDDEGNNSLDSKSGPKPQHVG) and 513–535 (HLTTTTTHGGSHTTTTNASEERP). The span at 453-465 (SDGRGGIDLHRSI) shows a compositional bias: basic and acidic residues. Positions 515-528 (TTTTTHGGSHTTTT) are enriched in low complexity.

The protein belongs to the TFB1 family. In terms of assembly, component of the 7-subunit TFIIH core complex composed of XPB/rad25, XPD/dnr-10, tcf-30/SSL1, tcf-29/TFB1, tcf-11/TFB2, tcf-14/TFB4 and rtf-1/TFB5, which is active in NER. The core complex associates with the 3-subunit CTD-kinase module TFIIK composed of div-66/cyclin H, prk-3/KIN28 and rtf-2/TFB3 to form the 10-subunit holoenzyme (holo-TFIIH) active in transcription.

The protein localises to the nucleus. Its function is as follows. Component of the general transcription and DNA repair factor IIH (TFIIH) core complex, which is involved in general and transcription-coupled nucleotide excision repair (NER) of damaged DNA and, when complexed to TFIIK, in RNA transcription by RNA polymerase II. In NER, TFIIH acts by opening DNA around the lesion to allow the excision of the damaged oligonucleotide and its replacement by a new DNA fragment. In transcription, TFIIH has an essential role in transcription initiation. When the pre-initiation complex (PIC) has been established, TFIIH is required for promoter opening and promoter escape. Phosphorylation of the C-terminal tail (CTD) of the largest subunit of RNA polymerase II by the kinase module TFIIK controls the initiation of transcription. This chain is General transcription and DNA repair factor IIH subunit tcf-29 (tcf-29), found in Neurospora crassa (strain ATCC 24698 / 74-OR23-1A / CBS 708.71 / DSM 1257 / FGSC 987).